We begin with the raw amino-acid sequence, 489 residues long: Leukocyte immunoglobulin-like receptor subfamily A member 1 (489 aa).

The first 16 residues, 1–16 (MTPIVTVLICLRLSLG), serve as a signal peptide directing secretion. Over 17–461 (PRTHVQAGTL…SHPQDYTVEN (445 aa)) the chain is Extracellular. 4 Ig-like C2-type domains span residues 27 to 116 (PKPT…PLEL), 119 to 224 (TGAY…GVSK), 226 to 315 (PSLS…DPLD), and 326 to 415 (PFIS…SDSL). A disulfide bond links Cys49 and Cys98. Asn140 is a glycosylation site (N-linked (GlcNAc...) asparagine). Cystine bridges form between Cys145-Cys197, Cys157-Cys167, and Cys246-Cys297. 3 N-linked (GlcNAc...) asparagine glycosylation sites follow: Asn281, Asn302, and Asn341. Residues Cys346 and Cys397 are joined by a disulfide bond. Residues 425-453 (TLSPPQNKSDSKAGAANTLSPSQNKTASH) are disordered. Residues Asn431 and Asn448 are each glycosylated (N-linked (GlcNAc...) asparagine). Residues 441–453 (NTLSPSQNKTASH) show a composition bias toward polar residues. The chain crosses the membrane as a helical span at residues 462 to 482 (LIRMGIAGLVLVVLGILLFEA). Topologically, residues 483–489 (QHSQRSL) are cytoplasmic.

As to expression, detected in monocytes and B-cells.

It localises to the membrane. Its function is as follows. May act as receptor for class I MHC antigens. In Homo sapiens (Human), this protein is Leukocyte immunoglobulin-like receptor subfamily A member 1 (LILRA1).